A 125-amino-acid polypeptide reads, in one-letter code: Basic leucine zipper transcriptional factor ATF-like (125 aa).

Over residues 1 to 14 (MPHSSDSSDSSFSR) the composition is skewed to low complexity. A disordered region spans residues 1–58 (MPHSSDSSDSSFSRSPPPGKQDSSDDVRKVQRREKNRIAAQKSRQRQTQKADTLHLES). Positions 26–89 (DVRKVQRREK…KYFTSVLSSH (64 aa)) constitute a bZIP domain. Residues 28 to 50 (RKVQRREKNRIAAQKSRQRQTQK) form a basic motif region. Ser43 is subject to Phosphoserine. Phosphothreonine is present on Thr48. Positions 54–75 (LHLESEDLEKQNAALRKEIKQL) are leucine-zipper.

This sequence belongs to the bZIP family. As to quaternary structure, heterodimer; mainly heterodimerizes with JUNB. The BATF-JUNB heterodimer interacts with IRF4 and IRF8. Interacts (via bZIP domain) with IRF4 and IRF8; the interaction is direct. Also forms heterodimers with JUN and JUND. Interacts with IFI35. In terms of processing, phosphorylated on serine and threonine residues and at least one tyrosine residue. Phosphorylation at Ser-43 inhibit DNA binding activity and transforms it as a negative regulator of AP-1 mediated transcription.

The protein resides in the nucleus. It localises to the cytoplasm. AP-1 family transcription factor that controls the differentiation of lineage-specific cells in the immune system: specifically mediates the differentiation of T-helper 17 cells (Th17), follicular T-helper cells (TfH), CD8(+) dendritic cells and class-switch recombination (CSR) in B-cells. Acts via the formation of a heterodimer with JUNB that recognizes and binds DNA sequence 5'-TGA[CG]TCA-3'. The BATF-JUNB heterodimer also forms a complex with IRF4 (or IRF8) in immune cells, leading to recognition of AICE sequence (5'-TGAnTCA/GAAA-3'), an immune-specific regulatory element, followed by cooperative binding of BATF and IRF4 (or IRF8) and activation of genes. Controls differentiation of T-helper cells producing interleukin-17 (Th17 cells) by binding to Th17-associated gene promoters: regulates expression of the transcription factor RORC itself and RORC target genes such as IL17 (IL17A or IL17B). Also involved in differentiation of follicular T-helper cells (TfH) by directing expression of BCL6 and MAF. In B-cells, involved in class-switch recombination (CSR) by controlling the expression of both AICDA and of germline transcripts of the intervening heavy-chain region and constant heavy-chain region (I(H)-C(H)). Following infection, can participate in CD8(+) dendritic cell differentiation via interaction with IRF4 and IRF8 to mediate cooperative gene activation. Regulates effector CD8(+) T-cell differentiation by regulating expression of SIRT1. Following DNA damage, part of a differentiation checkpoint that limits self-renewal of hematopoietic stem cells (HSCs): up-regulated by STAT3, leading to differentiation of HSCs, thereby restricting self-renewal of HSCs. In Bos taurus (Bovine), this protein is Basic leucine zipper transcriptional factor ATF-like (BATF).